A 387-amino-acid chain; its full sequence is Cysteine desulfurase (387 aa).

Pyridoxal 5'-phosphate-binding positions include 72 to 73 (GT), Asn-152, Gln-180, and 200 to 202 (SAH). Position 203 is an N6-(pyridoxal phosphate)lysine (Lys-203). Thr-238 contributes to the pyridoxal 5'-phosphate binding site. Cys-326 acts as the Cysteine persulfide intermediate in catalysis. A [2Fe-2S] cluster-binding site is contributed by Cys-326.

This sequence belongs to the class-V pyridoxal-phosphate-dependent aminotransferase family. NifS/IscS subfamily. Homodimer. Pyridoxal 5'-phosphate serves as cofactor.

It catalyses the reaction (sulfur carrier)-H + L-cysteine = (sulfur carrier)-SH + L-alanine. In terms of biological role, catalyzes the removal of elemental sulfur atoms from cysteine to produce alanine. Seems to participate in the biosynthesis of the nitrogenase metalloclusters by providing the inorganic sulfur required for the Fe-S core formation. The polypeptide is Cysteine desulfurase (Sinorhizobium fredii (strain NBRC 101917 / NGR234)).